A 397-amino-acid chain; its full sequence is MGCIKVISVFLAAIAAVDARAFFHNRGGSDVIPNSYIVVMKDGVTTEDFDSHISTVAATHNLNKAKRGSEAVGHKDSFNINGWRAYNGHFDEATIESILNDDKVNYVEHDRVVKLAALVTQPNAPTWGLGRVSHRAPGNRDFVYDSSAGQGITIYGVDTGIDIRHPEFAGRIRWGTNTVDNDNTDGNGHGTHTAGTFAGTTYGVAKKANIVAVKVLSAGGSGSTAGVIKGIDWCVTDVRSRNALGKAALNLSLGGSFSQANNDAVTRAQEAGIFVAVAAGNDNRDARNYSPASAPAVCTAASSTIDDQKSSFSNWGSIVDIYAPGSSILSAAPGGGTRTLSGTSMASPHVCGVGAAMLAQGVSVAQVCNRLKQIGNAVIRNPGTSTTNRLLYNGSGQ.

The N-terminal stretch at 1–19 (MGCIKVISVFLAAIAAVDA) is a signal peptide. A propeptide spanning residues 20–116 (RAFFHNRGGS…VEHDRVVKLA (97 aa)) is cleaved from the precursor. In terms of domain architecture, Inhibitor I9 spans 35–116 (SYIVVMKDGV…VEHDRVVKLA (82 aa)). The Peptidase S8 domain occupies 126–397 (TWGLGRVSHR…NRLLYNGSGQ (272 aa)). Residues aspartate 158 and histidine 189 each act as charge relay system in the active site. An N-linked (GlcNAc...) asparagine glycan is attached at asparagine 250. Serine 344 acts as the Charge relay system in catalysis. Asparagine 393 is a glycosylation site (N-linked (GlcNAc...) asparagine).

The protein belongs to the peptidase S8 family.

It localises to the secreted. In terms of biological role, secreted subtilisin-like serine protease with keratinolytic activity that contributes to pathogenicity. In Trichophyton tonsurans (Scalp ringworm fungus), this protein is Subtilisin-like protease 3 (SUB3).